The chain runs to 281 residues: Bifunctional protein FolD (281 aa).

NADP(+) is bound by residues 165–167 (GRG), T192, and V233.

This sequence belongs to the tetrahydrofolate dehydrogenase/cyclohydrolase family. As to quaternary structure, homodimer.

It carries out the reaction (6R)-5,10-methylene-5,6,7,8-tetrahydrofolate + NADP(+) = (6R)-5,10-methenyltetrahydrofolate + NADPH. The enzyme catalyses (6R)-5,10-methenyltetrahydrofolate + H2O = (6R)-10-formyltetrahydrofolate + H(+). It participates in one-carbon metabolism; tetrahydrofolate interconversion. Functionally, catalyzes the oxidation of 5,10-methylenetetrahydrofolate to 5,10-methenyltetrahydrofolate and then the hydrolysis of 5,10-methenyltetrahydrofolate to 10-formyltetrahydrofolate. This chain is Bifunctional protein FolD, found in Mycobacterium ulcerans (strain Agy99).